The following is a 133-amino-acid chain: Ribonuclease P protein component (133 aa).

Belongs to the RnpA family. Consists of a catalytic RNA component (M1 or rnpB) and a protein subunit.

It carries out the reaction Endonucleolytic cleavage of RNA, removing 5'-extranucleotides from tRNA precursor.. In terms of biological role, RNaseP catalyzes the removal of the 5'-leader sequence from pre-tRNA to produce the mature 5'-terminus. It can also cleave other RNA substrates such as 4.5S RNA. The protein component plays an auxiliary but essential role in vivo by binding to the 5'-leader sequence and broadening the substrate specificity of the ribozyme. The polypeptide is Ribonuclease P protein component (Pseudomonas entomophila (strain L48)).